We begin with the raw amino-acid sequence, 40 residues long: Natriuretic peptide PpNP-a (40 aa).

A propeptide spanning residues Ser-1–Ile-8 is cleaved from the precursor. The segment at Ser-1 to Ser-40 is disordered. Cys-12 and Cys-28 are joined by a disulfide.

This sequence belongs to the natriuretic peptide family. In terms of tissue distribution, expressed by the venom gland.

The protein localises to the secreted. In terms of biological role, snake venom natriuretic peptide that targets both NPR1 and NPR2. Exhibits hypotensive and vasodepressor activities. This is Natriuretic peptide PpNP-a from Pseudechis porphyriacus (Red-bellied black snake).